Here is a 649-residue protein sequence, read N- to C-terminus: tRNA-guanine(15) transglycosylase (649 aa).

D88 acts as the Nucleophile in catalysis. Residues D123 and A194 each contribute to the substrate site. Residues C280, C282, and C285 each coordinate Zn(2+). A PUA domain is found at 573 to 648 (KYRIVIDSSV…VAATLRGGLK (76 aa)).

Belongs to the archaeosine tRNA-ribosyltransferase family. It depends on Zn(2+) as a cofactor.

The catalysed reaction is guanosine(15) in tRNA + 7-cyano-7-deazaguanine = 7-cyano-7-carbaguanosine(15) in tRNA + guanine. The protein operates within tRNA modification; archaeosine-tRNA biosynthesis. Exchanges the guanine residue with 7-cyano-7-deazaguanine (preQ0) at position 15 in the dihydrouridine loop (D-loop) of archaeal tRNAs. In Methanococcus maripaludis (strain C6 / ATCC BAA-1332), this protein is tRNA-guanine(15) transglycosylase.